Reading from the N-terminus, the 588-residue chain is L-fucose isomerase (588 aa).

Residues E335 and D359 each act as proton acceptor in the active site. Mn(2+) is bound by residues E335, D359, and H525.

Belongs to the L-fucose isomerase family. The cofactor is Mn(2+).

The protein localises to the cytoplasm. The catalysed reaction is L-fucose = L-fuculose. The protein operates within carbohydrate degradation; L-fucose degradation; L-lactaldehyde and glycerone phosphate from L-fucose: step 1/3. Its function is as follows. Converts the aldose L-fucose into the corresponding ketose L-fuculose. The sequence is that of L-fucose isomerase from Streptococcus pneumoniae (strain Taiwan19F-14).